We begin with the raw amino-acid sequence, 251 residues long: Lactose phosphotransferase system repressor (251 aa).

Residues 3-58 (KHERLDEIAKLVNKKGTIRTNEIVEGLNVSDMTVRRDLIELENKGILTKIHGGARS) form the HTH deoR-type domain. Residues 20 to 39 (IRTNEIVEGLNVSDMTVRRD) constitute a DNA-binding region (H-T-H motif).

Functionally, repressor of the lactose catabolism operon. Galactose-6-phosphate is the inducer. This Staphylococcus aureus (strain N315) protein is Lactose phosphotransferase system repressor (lacR).